Here is a 311-residue protein sequence, read N- to C-terminus: Protein MGF 360-16R (311 aa).

This sequence belongs to the asfivirus MGF 360 family.

Its function is as follows. Plays a role in virus cell tropism, and may be required for efficient virus replication in macrophages. The polypeptide is Protein MGF 360-16R (African swine fever virus (strain Badajoz 1971 Vero-adapted) (Ba71V)).